The following is a 360-amino-acid chain: Phosphoserine aminotransferase (360 aa).

Arg-42 lines the L-glutamate pocket. The pyridoxal 5'-phosphate site is built by Trp-102, Thr-152, Asp-171, and Gln-194. Position 195 is an N6-(pyridoxal phosphate)lysine (Lys-195). 237–238 provides a ligand contact to pyridoxal 5'-phosphate; the sequence is NT.

It belongs to the class-V pyridoxal-phosphate-dependent aminotransferase family. SerC subfamily. In terms of assembly, homodimer. It depends on pyridoxal 5'-phosphate as a cofactor.

The protein localises to the cytoplasm. The enzyme catalyses O-phospho-L-serine + 2-oxoglutarate = 3-phosphooxypyruvate + L-glutamate. It carries out the reaction 4-(phosphooxy)-L-threonine + 2-oxoglutarate = (R)-3-hydroxy-2-oxo-4-phosphooxybutanoate + L-glutamate. It participates in amino-acid biosynthesis; L-serine biosynthesis; L-serine from 3-phospho-D-glycerate: step 2/3. The protein operates within cofactor biosynthesis; pyridoxine 5'-phosphate biosynthesis; pyridoxine 5'-phosphate from D-erythrose 4-phosphate: step 3/5. Catalyzes the reversible conversion of 3-phosphohydroxypyruvate to phosphoserine and of 3-hydroxy-2-oxo-4-phosphonooxybutanoate to phosphohydroxythreonine. The polypeptide is Phosphoserine aminotransferase (Coxiella burnetii (strain RSA 331 / Henzerling II)).